The primary structure comprises 153 residues: Arachidonate 5-lipoxygenase-activating protein (153 aa).

Over 1–8 (MDQEAMGN) the chain is Lumenal. Residues 9–30 (IVLLAIVTLISVVQNAFFAHKV) traverse the membrane as a helical segment. At 31–52 (EHESKTHNGRSFQRTGTPAFER) the chain is on the cytoplasmic side. A helical membrane pass occupies residues 53–77 (VYTANQNCVDAYPTFLVVLWSAGLF). Over 78–80 (CSQ) the chain is Lumenal. The chain crosses the membrane as a helical span at residues 81-102 (VPAAFAGLMYLFVRQKYFVGYL). Topologically, residues 103–107 (GERTQ) are cytoplasmic. An intramembrane segment occupies 108–115 (STPGYIFG). A helical membrane pass occupies residues 116 to 128 (KRIILFLFLMSLA). The Lumenal portion of the chain corresponds to 129-153 (GIFNYFLILFFGSDFENYIKTITTT).

Belongs to the MAPEG family. Homotrimer. Interacts with LTC4S and ALOX5.

It is found in the nucleus membrane. The protein localises to the endoplasmic reticulum membrane. In terms of biological role, required for leukotriene biosynthesis by ALOX5 (5-lipoxygenase). Anchors ALOX5 to the membrane. Binds arachidonic acid, and could play an essential role in the transfer of arachidonic acid to ALOX5. Binds to MK-886, a compound that blocks the biosynthesis of leukotrienes. This chain is Arachidonate 5-lipoxygenase-activating protein (ALOX5AP), found in Sus scrofa (Pig).